The following is a 284-amino-acid chain: uncharacterized protein (284 aa).

Low complexity-rich tracts occupy residues 110–123 (NGPR…PNNG) and 130–149 (NGPM…NGPN). The segment at 110–176 (NGPRGRQMNG…PNEFDSDDDD (67 aa)) is disordered.

The protein resides in the virion. This is an uncharacterized protein from Acanthamoeba polyphaga mimivirus (APMV).